A 290-amino-acid chain; its full sequence is Ribosomal RNA small subunit methyltransferase A (290 aa).

N27, L29, G54, E75, D100, and N125 together coordinate S-adenosyl-L-methionine.

Belongs to the class I-like SAM-binding methyltransferase superfamily. rRNA adenine N(6)-methyltransferase family. RsmA subfamily.

The protein resides in the cytoplasm. It catalyses the reaction adenosine(1518)/adenosine(1519) in 16S rRNA + 4 S-adenosyl-L-methionine = N(6)-dimethyladenosine(1518)/N(6)-dimethyladenosine(1519) in 16S rRNA + 4 S-adenosyl-L-homocysteine + 4 H(+). In terms of biological role, specifically dimethylates two adjacent adenosines (A1518 and A1519) in the loop of a conserved hairpin near the 3'-end of 16S rRNA in the 30S particle. May play a critical role in biogenesis of 30S subunits. In Streptococcus pyogenes serotype M18 (strain MGAS8232), this protein is Ribosomal RNA small subunit methyltransferase A.